The sequence spans 536 residues: MFS-type efflux pump MFS1 (536 aa).

3 helical membrane passes run 30–50 (VTGL…LLVA), 80–100 (YLLT…FFPV), and 102–122 (WVFL…GAAP). The N-linked (GlcNAc...) asparagine glycan is linked to N123. 3 consecutive transmembrane segments (helical) span residues 133–153 (VAGI…AYSI), 163–183 (GAIG…GGAF), and 191–211 (WCFY…LIFL). N-linked (GlcNAc...) asparagine glycosylation is present at N221. 8 helical membrane-spanning segments follow: residues 234–254 (IGTA…QWGG), 264–284 (IIAL…FQIR), 306–326 (FFLF…PIWF), 342–362 (IPMV…VTAI), 366–386 (APLY…LTTF), 400–420 (IIFG…AQAV), 426–446 (VAVG…LFVS), and 503–523 (TWYV…GMEW).

The protein belongs to the major facilitator superfamily. TCR/Tet family.

The protein localises to the cell membrane. Functionally, MFS-type efflux pump involved in the modulation susceptibility to azoles, including fluconazole, itraconazole, miconazole and voriconazole. Also confers increased resistance chloramphenicol and thiamphenicol, suggesting that it acts as a pleiotropic drug transporter with a broad substrate spectrum. Finally, increases the tolerance to cycloheximide when expressed in S.cerevisiae, but not in dermatophyte species. The chain is MFS-type efflux pump MFS1 from Arthroderma benhamiae (strain ATCC MYA-4681 / CBS 112371) (Trichophyton mentagrophytes).